The sequence spans 633 residues: Extracellular metalloproteinase mep (633 aa).

The signal sequence occupies residues Met-1 to Ala-18. Positions His-19 to Asp-244 are excised as a propeptide. Asn-326 carries an N-linked (GlcNAc...) asparagine glycan. His-428 lines the Zn(2+) pocket. Glu-429 is an active-site residue. His-432 contacts Zn(2+). N-linked (GlcNAc...) asparagine glycosylation is present at Asn-514.

This sequence belongs to the peptidase M36 family. It depends on Zn(2+) as a cofactor.

The protein localises to the secreted. Its function is as follows. Secreted metalloproteinase that allows assimilation of proteinaceous substrates. The protein is Extracellular metalloproteinase mep (mep) of Aspergillus terreus (strain NIH 2624 / FGSC A1156).